Consider the following 433-residue polypeptide: Adenylosuccinate synthetase (433 aa).

GTP is bound by residues 11 to 17 (GDEGKGK) and 39 to 41 (GHT). D12 (proton acceptor) is an active-site residue. 2 residues coordinate Mg(2+): D12 and G39. Residues 12-15 (DEGK), 37-40 (NAGH), T134, R148, N230, T245, and R309 contribute to the IMP site. Catalysis depends on H40, which acts as the Proton donor. A substrate-binding site is contributed by 305–311 (VTTGRKR). GTP contacts are provided by residues R311, 337–339 (KLD), and 419–421 (GTG).

It belongs to the adenylosuccinate synthetase family. In terms of assembly, homodimer. Requires Mg(2+) as cofactor.

Its subcellular location is the cytoplasm. The catalysed reaction is IMP + L-aspartate + GTP = N(6)-(1,2-dicarboxyethyl)-AMP + GDP + phosphate + 2 H(+). The protein operates within purine metabolism; AMP biosynthesis via de novo pathway; AMP from IMP: step 1/2. In terms of biological role, plays an important role in the de novo pathway and in the salvage pathway of purine nucleotide biosynthesis. Catalyzes the first committed step in the biosynthesis of AMP from IMP. The polypeptide is Adenylosuccinate synthetase (Saccharomyces cerevisiae (strain Lalvin EC1118 / Prise de mousse) (Baker's yeast)).